Here is a 141-residue protein sequence, read N- to C-terminus: Arsenate reductase (141 aa).

Cys-12 acts as the Nucleophile; cysteine thioarsenate intermediate in catalysis.

The protein belongs to the ArsC family.

It catalyses the reaction [glutaredoxin]-dithiol + arsenate + glutathione + H(+) = glutathionyl-S-S-[glutaredoxin] + arsenite + H2O. Functionally, involved in resistance to arsenate. Catalyzes the reduction of arsenate [As(V)] to arsenite [As(III)]. The chain is Arsenate reductase from Escherichia coli.